A 177-amino-acid chain; its full sequence is Disulfide bond formation protein B (177 aa).

At Met-1 to Val-14 the chain is on the cytoplasmic side. The helical transmembrane segment at Trp-15–Tyr-31 threads the bilayer. The Periplasmic segment spans residues Phe-32 to Leu-49. An intrachain disulfide couples Cys-41 to Cys-44. Residues Ala-50–Pro-65 traverse the membrane as a helical segment. Over Leu-66–Leu-72 the chain is Cytoplasmic. A helical membrane pass occupies residues Ile-73–Phe-90. The Periplasmic portion of the chain corresponds to Arg-91–Gln-145. Cys-105 and Cys-131 form a disulfide bridge. A helical membrane pass occupies residues Trp-146–Ala-164. At Gln-165–Asn-177 the chain is on the cytoplasmic side.

Belongs to the DsbB family.

It localises to the cell inner membrane. Functionally, required for disulfide bond formation in some periplasmic proteins. Acts by oxidizing the DsbA protein. The chain is Disulfide bond formation protein B from Haemophilus influenzae (strain 86-028NP).